Reading from the N-terminus, the 399-residue chain is Cyclic dehypoxanthine futalosine synthase (399 aa).

The Radical SAM core domain maps to 56-288 (ATYIIERNIN…IAIARVFLDN (233 aa)). 3 residues coordinate [4Fe-4S] cluster: Cys-70, Cys-74, and Cys-77.

It belongs to the radical SAM superfamily. MqnC family. Requires [4Fe-4S] cluster as cofactor.

It carries out the reaction dehypoxanthine futalosine + S-adenosyl-L-methionine = cyclic dehypoxanthinylfutalosinate + 5'-deoxyadenosine + L-methionine + H(+). Its pathway is quinol/quinone metabolism; menaquinone biosynthesis. In terms of biological role, radical SAM enzyme that catalyzes the cyclization of dehypoxanthine futalosine (DHFL) into cyclic dehypoxanthine futalosine (CDHFL), a step in the biosynthesis of menaquinone (MK, vitamin K2). The polypeptide is Cyclic dehypoxanthine futalosine synthase (Streptomyces coelicolor (strain ATCC BAA-471 / A3(2) / M145)).